Reading from the N-terminus, the 673-residue chain is Ion-translocating oxidoreductase complex subunit C (673 aa).

4Fe-4S ferredoxin-type domains follow at residues 368 to 397 (MGAP…QQLY) and 407 to 436 (KATA…VQYF). [4Fe-4S] cluster contacts are provided by cysteine 377, cysteine 380, cysteine 383, cysteine 387, cysteine 416, cysteine 419, cysteine 422, and cysteine 426. Disordered stretches follow at residues 534 to 553 (QARA…SGGA) and 563 to 653 (IARA…AAVA).

It belongs to the 4Fe4S bacterial-type ferredoxin family. RnfC subfamily. As to quaternary structure, the complex is composed of six subunits: RsxA, RsxB, RsxC, RsxD, RsxE and RsxG. Requires [4Fe-4S] cluster as cofactor.

The protein resides in the cell inner membrane. Functionally, part of a membrane-bound complex that couples electron transfer with translocation of ions across the membrane. Required to maintain the reduced state of SoxR. In Salmonella gallinarum (strain 287/91 / NCTC 13346), this protein is Ion-translocating oxidoreductase complex subunit C.